The sequence spans 7119 residues: Replicase polyprotein 1ab (7119 aa).

The CoV Nsp1 globular domain maps to 25-151; that stretch reads RSDHVACTVP…EYTFLLRKNG (127 aa). Positions 167–195 constitute a BetaCoV Nsp1 C-terminal domain; that stretch reads TPYVEILDDLEADPTGKYSQNLLKKLIGG. The CoV Nsp2 N-terminal domain occupies 197–472; the sequence is CIPIDQYMCG…WDKVVETANL (276 aa). The Zn(2+) site is built by C339, C342, C358, and C360. Positions 339–360 are C4; it reads CNACGRGTWCTGNAIQGFACDC. In terms of domain architecture, CoV Nsp2 middle spans 478-712; the sequence is QRSLNFCQQF…LDIMSKAMKL (235 aa). The region spanning 714–847 is the CoV Nsp2 C-terminal domain; sequence HTNVSWAGTK…VSTLFRLKGG (134 aa). One can recognise a Ubiquitin-like 1 domain in the interval 851–960; sequence KKVTFGDVNT…MTFSINPVED (110 aa). 2 Macro domains span residues 1152–1321 and 1322–1446; these read DLSK…KPDG and LVYS…AIQT. A DPUP domain is found at 1446–1519; it reads TPETAFINNV…LEACRAYLTS (74 aa). Residues 1524–1579 enclose the Ubiquitin-like 2 domain; the sequence is QVNIEVLVTIDGVNFRTVILNDTTTFRKQLGATFYKGVDISDAFPTVKMGGESLFV. The 272-residue stretch at 1593–1864 folds into the Peptidase C16 domain; it reads EYYGTSDVTF…KVEVNPDLSN (272 aa). C1634 functions as the For PL-PRO activity in the catalytic mechanism. C1714, C1717, C1749, and C1751 together coordinate Zn(2+). The C4-type zinc-finger motif lies at 1714–1751; it reads CTVCGIRDIEYTGMRACVYAGVNSMEELQSVFNETCVC. Residues H1800 and D1815 each act as for PL-PRO activity in the active site. Residues 1878-1995 enclose the Nucleic acid-binding domain; the sequence is TIKYSPATIL…QLYDVAPIVL (118 aa). In terms of domain architecture, G2M spans 2012–2133; the sequence is HNVPVVDDVP…AKITVTATTA (122 aa). 3 helical membrane-spanning segments follow: residues 2112-2132, 2145-2165, and 2222-2242; these read VLLG…TATT, FVVN…LFFL, and LFLL…LVLF. The interval 2112 to 2395 is HD1; the sequence is VLLGASSLFA…VTHIPLHGLV (284 aa). A 3Ecto domain is found at 2259–2325; the sequence is LAIYKEVRSY…LQMLQTHITS (67 aa). Intrachain disulfides connect C2275–C2303 and C2293–C2300. The next 3 membrane-spanning stretches (helical) occupy residues 2326–2346, 2350–2370, and 2375–2395; these read YVLN…YVLY, FNVL…SAFV, and YNYI…HGLV. The segment at 2409–2499 is Y1; that stretch reads KFYSHVINGC…TLRRLIKPTD (91 aa). The 374-residue stretch at 2409–2782 folds into the CoV Nsp3 Y domain; sequence KFYSHVINGC…LSVKFSATKI (374 aa). Zn(2+) is bound by residues H2413, C2418, C2423, C2426, C2459, H2462, C2466, and C2469. The tract at residues 2413–2426 is ZF1; sequence HVINGCKDTACLLC. Residues 2459–2469 form a ZF2 region; the sequence is CCKHNWNCVEC. The interval 2500–2598 is Y2; it reads QSHYYVDSVV…LVDVNLVTTV (99 aa). The coV-Y stretch occupies residues 2500 to 2782; the sequence is QSHYYVDSVV…LSVKFSATKI (283 aa). Positions 2599–2681 are Y3; sequence GDSREIAIKM…DALQYAHKND (83 aa). A Y4 region spans residues 2682 to 2782; that stretch reads IQLTTECYNN…LSVKFSATKI (101 aa). 4 helical membrane passes run 2800-2820, 3072-3092, 3105-3125, and 3149-3169; these read GYCI…FCLP, STSL…FYYI, CAVV…FIVA, and AFIM…IWML. Residues 2800–3169 form an HD2 region; sequence GYCILTLFVF…FGAVVPIWML (370 aa). Positions 3195–3291 constitute a Nsp4C domain; it reads VFTDGKLNCS…NCSVTSSVLQ (97 aa). Positions 3292–3597 constitute a Peptidase C30 domain; sequence SGLVKMSAPS…NMQVMGVVMQ (306 aa). Residues H3332 and C3439 each act as for 3CL-PRO activity in the active site. 7 consecutive transmembrane segments (helical) span residues 3603–3623, 3637–3657, 3662–3682, 3707–3727, 3735–3755, 3784–3804, and 3808–3828; these read ISYG…VSVM, TIPT…MFTV, TFMS…NIVY, RTTH…AIIV, MSNL…YVIG, LAKF…FILP, and LVLL…GVFS. The HD3 stretch occupies residues 3603 to 3828; sequence ISYGFIHWLI…MCTMYFGVFS (226 aa). The RdRp Nsp7 cofactor domain occupies 3890–3972; the sequence is SKLTDLKCTS…DLFENSSVLQ (83 aa). Positions 3973–4171 constitute a RdRp Nsp8 cofactor domain; it reads ATLTEFSHLA…RSSSSAVKLQ (199 aa). One can recognise a Nsp9 ssRNA-binding domain in the interval 4172–4281; it reads NNEIHPKGLK…GHIAATVRLQ (110 aa). Residues 4282–4420 form the ExoN/MTase coactivator domain; the sequence is AGANTEFASN…DALRNNTVPQ (139 aa). Residues C4355, C4358, H4364, C4371, C4397, C4400, C4408, and C4410 each contribute to the Zn(2+) site. 2 zinc fingers span residues 4355–4371 and 4397–4410; these read CLYC…SGVC and CNVC…GCNC. In terms of domain architecture, NiRAN spans 4426–4683; it reads FLNRVRGSSV…AAETHKDCDF (258 aa). 2 residues coordinate Mn(2+): N4631 and D4640. In terms of domain architecture, Nsp12 Interface spans 4688–4786; sequence IEWPLLEYDY…MNMDFNIHRH (99 aa). H4717, C4723, C4728, C4732, and C4909 together coordinate Zn(2+). A Nsp12 RNA-dependent RNA polymerase domain is found at 4787–5354; the sequence is RLALKELMMY…DLYSSPTTLQ (568 aa). A rdRp Fingers N-ter region spans residues 4789-5003; sequence ALKELMMYAA…HQKMLKSMAA (215 aa). Positions 5004–5042 are rdRp Palm N-ter; it reads TRGATCVIGTTKFYGGWDFMLKTLYKDVESPHLMGWDYP. One can recognise a RdRp catalytic domain in the interval 5034 to 5196; that stretch reads PHLMGWDYPK…CYNSDYAAKG (163 aa). A rdRp Fingers C-ter region spans residues 5043 to 5101; it reads KCDRAMPNMCRILASLILARKHSTCCTNSDRFYRLANECAQVLSEYVLCGGGYYVKPGG. 3 residues coordinate Zn(2+): H5064, C5067, and C5068. Residues 5102 to 5237 form a rdRp Palm C-ter region; that stretch reads TSSGDATTAY…EKGPHEFCSQ (136 aa). Residues S5181, D5182, and D5183 contribute to the active site. Residues 5238–5354 form a rdRp Thumb region; the sequence is HTLYIKDGDD…DLYSSPTTLQ (117 aa). Positions 5355–5467 constitute a CV ZBD domain; sequence AVGSCVVCHS…MEFNRLATCD (113 aa). Zn(2+)-binding residues include C5359, C5362, C5370, C5373, C5380, C5383, H5387, H5393, C5404, C5409, C5426, and H5429. One can recognise a (+)RNA virus helicase ATP-binding domain in the interval 5611–5792; that stretch reads TVPEEFANHV…MCNLGPDIFL (182 aa). Position 5636-5643 (5636-5643) interacts with ATP; it reads GPPGTGKS. One can recognise a (+)RNA virus helicase C-terminal domain in the interval 5793 to 5967; the sequence is SVCYRCPKEI…GLFKDCSRED (175 aa). The 216-residue stretch at 6024–6239 folds into the ExoN domain; that stretch reads LFITRDEAIR…RCLAIYDCFI (216 aa). Residues D6042, E6044, and E6143 contribute to the active site. Zn(2+) is bound by residues C6159, C6162, C6178, H6181, H6209, C6213, and H6216. Active-site residues include H6220 and D6225. C6231 provides a ligand contact to Zn(2+). An N7-MTase domain is found at 6248–6475; that stretch reads YPYISHEQKL…NLWSTFVKVQ (228 aa). 6283–6289 is an S-adenosyl-L-methionine binding site; that stretch reads DIGNPKG. The gpppA-binding stretch occupies residues 6361 to 6375; that stretch reads CNGGSLYVNKHAFHT. Residues C6399, C6421, C6432, and H6435 each coordinate Zn(2+). Residues 6476–6536 enclose the Nsp15 N-terminal oligomerization domain; it reads GLENIAFNVI…NVAFELYAKR (61 aa). The region spanning 6537–6658 is the AV-Nsp11N/CoV-Nsp15M domain; sequence AVRSHPDLNL…LYKKVNNEFV (122 aa). The NendoU domain occupies 6675-6814; sequence TVLTPMEEDF…RDGKVQTFYP (140 aa). Catalysis depends on residues H6705, H6720, K6760, K6863, D6947, K6987, and E7020. The region spanning 6819 to 7113 is the Nidovirus-type SAM-dependent 2'-O-MTase domain; the sequence is TNDWKPGLTM…TLNVSTDVLV (295 aa).

This sequence belongs to the coronaviruses polyprotein 1ab family. As to quaternary structure, interacts with host PHB and PHB2. Interacts with papain-like protease nsp3 and non-structural protein 6. In terms of assembly, monomer. Homodimer. Only the homodimer shows catalytic activity. As to quaternary structure, interacts with nsp8 and nsp12 to form the replication-transcription complex (RTC): nsp12, nsp7, two subunits of nsp8, and up to two subunits of nsp13. Interacts with nsp7, nsp13 and nsp12 to form the replication-transcription complex (RTC): nsp12, nsp7, two subunits of nsp8, and up to two subunits of nsp13. In terms of assembly, interacts with nsp12. As to quaternary structure, interacts with proofreading exoribonuclease nsp14 and 2'-O-methyltransferase nsp16; these interactions enhance nsp14 and nsp16 enzymatic activities. Interacts with nsp7 and nsp8 to form the replication-transcription complex (RTC): nsp12, nsp7, two subunits of nsp8, and up to two subunits of nsp13. Interacts with nsp9. In terms of assembly, interacts with nsp8 to form the replication-transcription complex (RTC): nsp12, nsp7, two subunits of nsp8, and up to two subunits of nsp13. Requires Mn(2+) as cofactor. It depends on Mg(2+) as a cofactor. Post-translationally, specific enzymatic cleavages in vivo by its own proteases yield mature proteins. 3CL-PRO and PL-PRO proteinases are autocatalytically processed.

The protein resides in the host membrane. It localises to the host cytoplasm. It is found in the host perinuclear region. Its subcellular location is the host endoplasmic reticulum-Golgi intermediate compartment. It catalyses the reaction RNA(n) + a ribonucleoside 5'-triphosphate = RNA(n+1) + diphosphate. The catalysed reaction is ATP + H2O = ADP + phosphate + H(+). It carries out the reaction Thiol-dependent hydrolysis of ester, thioester, amide, peptide and isopeptide bonds formed by the C-terminal Gly of ubiquitin (a 76-residue protein attached to proteins as an intracellular targeting signal).. The enzyme catalyses a 5'-end (N(7)-methyl 5'-triphosphoguanosine)-ribonucleoside in mRNA + S-adenosyl-L-methionine = a 5'-end (N(7)-methyl 5'-triphosphoguanosine)-(2'-O-methyl-ribonucleoside) in mRNA + S-adenosyl-L-homocysteine + H(+). It catalyses the reaction uridylyl-uridylyl-ribonucleotide-RNA = a 3'-end uridylyl-2',3'-cyclophospho-uridine-RNA + a 5'-end dephospho-ribonucleoside-RNA. The catalysed reaction is a 5'-end diphospho-ribonucleoside in mRNA + GTP + H(+) = a 5'-end (5'-triphosphoguanosine)-ribonucleoside in mRNA + diphosphate. It carries out the reaction a 5'-end (5'-triphosphoguanosine)-ribonucleoside in mRNA + S-adenosyl-L-methionine = a 5'-end (N(7)-methyl 5'-triphosphoguanosine)-ribonucleoside in mRNA + S-adenosyl-L-homocysteine. The replicase polyprotein of coronaviruses is a multifunctional protein: it contains the activities necessary for the transcription of negative stranded RNA, leader RNA, subgenomic mRNAs and progeny virion RNA as well as proteinases responsible for the cleavage of the polyprotein into functional products. In terms of biological role, inhibits host translation by interacting with the 40S ribosomal subunit. The nsp1-40S ribosome complex further induces an endonucleolytic cleavage near the 5'UTR of host mRNAs, targeting them for degradation. Viral mRNAs are not susceptible to nsp1-mediated endonucleolytic RNA cleavage thanks to the presence of a 5'-end leader sequence and are therefore protected from degradation. By suppressing host gene expression, nsp1 facilitates efficient viral gene expression in infected cells and evasion from host immune response. Its function is as follows. May play a role in the modulation of host cell survival signaling pathway by interacting with host PHB and PHB2. Indeed, these two proteins play a role in maintaining the functional integrity of the mitochondria and protecting cells from various stresses. Functionally, responsible for the cleavages located at the N-terminus of the replicase polyprotein. In addition, PL-PRO possesses a deubiquitinating/deISGylating activity and processes both 'Lys-48'- and 'Lys-63'-linked polyubiquitin chains from cellular substrates. Participates together with nsp4 in the assembly of virally-induced cytoplasmic double-membrane vesicles necessary for viral replication. Antagonizes innate immune induction of type I interferon by blocking the phosphorylation, dimerization and subsequent nuclear translocation of host IRF3. Also prevents host NF-kappa-B signaling. Participates in the assembly of virally-induced cytoplasmic double-membrane vesicles necessary for viral replication. In terms of biological role, cleaves the C-terminus of replicase polyprotein at 11 sites. Recognizes substrates containing the core sequence [ILMVF]-Q-|-[SGACN]. Also able to bind an ADP-ribose-1''-phosphate (ADRP). Its function is as follows. Plays a role in the initial induction of autophagosomes from host endoplasmic reticulum. Later, limits the expansion of these phagosomes that are no longer able to deliver viral components to lysosomes. Functionally, forms a hexadecamer with nsp8 (8 subunits of each) that may participate in viral replication by acting as a primase. Alternatively, may synthesize substantially longer products than oligonucleotide primers. Forms a hexadecamer with nsp7 (8 subunits of each) that may participate in viral replication by acting as a primase. Alternatively, may synthesize substantially longer products than oligonucleotide primers. In terms of biological role, forms a primer, NSP9-pU, which is utilized by the polymerase for the initiation of RNA chains. Interacts with ribosome signal recognition particle RNA (SRP). Together with NSP8, suppress protein integration into the cell membrane, thereby disrupting host immune defenses. Its function is as follows. Plays a pivotal role in viral transcription by stimulating both nsp14 3'-5' exoribonuclease and nsp16 2'-O-methyltransferase activities. Therefore plays an essential role in viral mRNAs cap methylation. Functionally, RNA-directed RNA polymerase that catalyzes the transcription of viral genomic and subgenomic RNAs. Acts in complex with nsp7 and nsp8 to transcribe both the minus and positive strands of genomic RNA. The kinase-like NiRAN domain of NSP12 attaches one or more nucleotides to the amino terminus of NSP9, forming a covalent RNA-protein intermediate that serves as transcription/replication primer. Subgenomic RNAs (sgRNAs) are formed by discontinuous transcription: The polymerase has the ability to pause at transcription-regulating sequences (TRS) and jump to the leader TRS, resulting in a major deletion. This creates a series of subgenomic RNAs that are replicated, transcribed and translated. In addition, Nsp12 is a subunit of the viral RNA capping enzyme that catalyzes the RNA guanylyltransferase reaction for genomic and sub-genomic RNAs. Subsequently, the NiRAN domain transfers RNA to GDP, and forms the core cap structure GpppA-RNA. RNA-directed RNA polymerase that catalyzes the transcription of viral genomic and subgenomic RNAs. Acts in complex with nsp7 and nsp8 to transcribe both the minus and positive strands of genomic RNA. Subgenomic RNAs (sgRNAs) are formed by discontinuous transcription: The polymerase has the ability to pause at transcription-regulating sequences (TRS) and jump to the leader TRS, resulting in a major deletion. This creates a series of subgenomic RNAs that are replicated, transcribed and translated. In addition, Nsp12 is a subunit of the viral RNA capping enzyme that catalyzes the RNA guanylyltransferase reaction for genomic and sub-genomic RNAs. The kinase-like NiRAN domain of NSP12 transfers RNA to the amino terminus of NSP9, forming a covalent RNA-protein intermediate. Subsequently, the NiRAN domain transfers RNA to GDP, and forms the core cap structure GpppA-RNA. In terms of biological role, multi-functional protein with a zinc-binding domain in N-terminus displaying RNA and DNA duplex-unwinding activities with 5' to 3' polarity. Activity of helicase is dependent on magnesium. Its function is as follows. Plays a role in viral RNA synthesis through two distinct activities. The N7-guanine methyltransferase activity plays a role in the formation of the cap structure GpppA-RNA. The proofreading exoribonuclease reduces the sensitivity of the virus to RNA mutagens during replication. This activity acts on both ssRNA and dsRNA in a 3'-5' direction. Functionally, plays a role in viral transcription/replication and prevents the simultaneous activation of host cell dsRNA sensors, such as MDA5/IFIH1, OAS, and PKR. Acts by degrading the 5'-polyuridines generated during replication of the poly(A) region of viral genomic and subgenomic RNAs. Catalyzes a two-step reaction in which a 2'3'-cyclic phosphate (2'3'-cP) is first generated by 2'-O transesterification, which is then hydrolyzed to a 3'-phosphate (3'-P). If not degraded, poly(U) RNA would hybridize with poly(A) RNA tails and activate host dsRNA sensors. Methyltransferase that mediates mRNA cap 2'-O-ribose methylation to the 5'-cap structure of viral mRNAs. N7-methyl guanosine cap is a prerequisite for binding of nsp16. Therefore plays an essential role in viral mRNAs cap methylation which is essential to evade immune system. The chain is Replicase polyprotein 1ab (rep) from Tylonycteris pachypus (Lesser bamboo bat).